A 386-amino-acid polypeptide reads, in one-letter code: 11-beta-hydroxysteroid dehydrogenase type 2 (386 aa).

82 to 111 lines the NAD(+) pocket; that stretch reads TRAVLITGCDTGFGKETAKKLDAMGFTVLA. Ser-219 serves as a coordination point for substrate. Tyr-232 acts as the Proton acceptor in catalysis.

Belongs to the short-chain dehydrogenases/reductases (SDR) family. Interacts with ligand-free cytoplasmic NR3C2. As to expression, highly expressed in kidney. Also found in colon and small intestine. Not expressed in the adrenal gland. Expressed in uterus.

It is found in the microsome. The protein localises to the endoplasmic reticulum. The enzyme catalyses an 11beta-hydroxysteroid + NAD(+) = an 11-oxosteroid + NADH + H(+). The catalysed reaction is corticosterone + NAD(+) = 11-dehydrocorticosterone + NADH + H(+). It carries out the reaction 11beta,17beta-dihydroxyandrost-4-ene-3-one + NAD(+) = 17beta-hydroxyandrost-4-ene-3,11-dione + NADH + H(+). It catalyses the reaction 11beta-hydroxyandrost-4-ene-3,17-dione + NAD(+) = androst-4-ene-3,11,17-trione + NADH + H(+). It functions in the pathway steroid metabolism. Inhibited by glycyrrhetinic acid. Induced by progesterone, through the Ihh signaling pathway. In terms of biological role, catalyzes the conversion of biologically active 11beta-hydroxyglucocorticoids (11beta-hydroxysteroid) such as corticosterone, to inactive 11-ketoglucocorticoids (11-oxosteroid) such as 11-dehydrocorticosterone, in the presence of NAD(+). Functions as a dehydrogenase (oxidase), thereby decreasing the concentration of active glucocorticoids, thus protecting the nonselective mineralocorticoid receptor from occupation by glucocorticoids. Plays an important role in maintaining glucocorticoids balance during preimplantation and protects the fetus from excessive maternal corticosterone exposure. Catalyzes the oxidation of 11beta-hydroxytestosterone (11beta,17beta-dihydroxyandrost-4-ene-3-one) to 11-ketotestosterone (17beta-hydroxyandrost-4-ene-3,11-dione), a major bioactive androgen. Catalyzes the conversion of 11beta-hydroxyandrostenedione (11beta-hydroxyandrost-4-ene-3,17-dione) to 11-ketoandrostenedione (androst-4-ene-3,11,17-trione), which can be further metabolized to 11-ketotestosterone. Converts 7-beta-25-dihydroxycholesterol to 7-oxo-25-hydroxycholesterol in vitro. 7-beta-25-dihydroxycholesterol (not 7-oxo-25-hydroxycholesterol) acts as a ligand for the G-protein-coupled receptor (GPCR) Epstein-Barr virus-induced gene 2 (EBI2) and may thereby regulate immune cell migration. The protein is 11-beta-hydroxysteroid dehydrogenase type 2 (Hsd11b2) of Mus musculus (Mouse).